We begin with the raw amino-acid sequence, 367 residues long: UDP-N-acetylglucosamine--N-acetylmuramyl-(pentapeptide) pyrophosphoryl-undecaprenol N-acetylglucosamine transferase (367 aa).

Residues 15–17 (TGG), asparagine 127, arginine 163, serine 191, isoleucine 249, and glutamine 294 each bind UDP-N-acetyl-alpha-D-glucosamine.

It belongs to the glycosyltransferase 28 family. MurG subfamily.

It is found in the cell inner membrane. The enzyme catalyses di-trans,octa-cis-undecaprenyl diphospho-N-acetyl-alpha-D-muramoyl-L-alanyl-D-glutamyl-meso-2,6-diaminopimeloyl-D-alanyl-D-alanine + UDP-N-acetyl-alpha-D-glucosamine = di-trans,octa-cis-undecaprenyl diphospho-[N-acetyl-alpha-D-glucosaminyl-(1-&gt;4)]-N-acetyl-alpha-D-muramoyl-L-alanyl-D-glutamyl-meso-2,6-diaminopimeloyl-D-alanyl-D-alanine + UDP + H(+). It functions in the pathway cell wall biogenesis; peptidoglycan biosynthesis. Functionally, cell wall formation. Catalyzes the transfer of a GlcNAc subunit on undecaprenyl-pyrophosphoryl-MurNAc-pentapeptide (lipid intermediate I) to form undecaprenyl-pyrophosphoryl-MurNAc-(pentapeptide)GlcNAc (lipid intermediate II). The polypeptide is UDP-N-acetylglucosamine--N-acetylmuramyl-(pentapeptide) pyrophosphoryl-undecaprenol N-acetylglucosamine transferase (Burkholderia vietnamiensis (strain G4 / LMG 22486) (Burkholderia cepacia (strain R1808))).